The primary structure comprises 382 residues: Ribosomal RNA large subunit methyltransferase F (382 aa).

Disordered stretches follow at residues 1–53 and 269–288; these read MTKP…LHRD and NRAS…KSQL. A compositionally biased stretch (basic residues) spans 8 to 24; it reads ASRKPVTKSGRNSKRSR. A compositionally biased stretch (basic and acidic residues) spans 269–286; sequence NRASKGHKLEPKAPKDKS.

Belongs to the methyltransferase superfamily. METTL16/RlmF family.

The protein localises to the cytoplasm. It carries out the reaction adenosine(1618) in 23S rRNA + S-adenosyl-L-methionine = N(6)-methyladenosine(1618) in 23S rRNA + S-adenosyl-L-homocysteine + H(+). Specifically methylates the adenine in position 1618 of 23S rRNA. This is Ribosomal RNA large subunit methyltransferase F from Shewanella woodyi (strain ATCC 51908 / MS32).